We begin with the raw amino-acid sequence, 102 residues long: Small ribosomal subunit protein uS10 (102 aa).

This sequence belongs to the universal ribosomal protein uS10 family. In terms of assembly, part of the 30S ribosomal subunit.

Involved in the binding of tRNA to the ribosomes. The sequence is that of Small ribosomal subunit protein uS10 from Clostridium beijerinckii (strain ATCC 51743 / NCIMB 8052) (Clostridium acetobutylicum).